The following is a 332-amino-acid chain: ADP-L-glycero-D-manno-heptose-6-epimerase (332 aa).

Residues 10-11 (MI), 31-32 (DK), Lys38, Lys53, 75-79 (MGACS), and Asn92 contribute to the NADP(+) site. Catalysis depends on Tyr145, which acts as the Proton acceptor. An NADP(+)-binding site is contributed by Lys149. Asn173 serves as a coordination point for substrate. 2 residues coordinate NADP(+): Val174 and Lys182. Lys182 functions as the Proton acceptor in the catalytic mechanism. Substrate contacts are provided by residues Arg184, His191, 205-208 (FKSY), Arg219, and Tyr290.

The protein belongs to the NAD(P)-dependent epimerase/dehydratase family. HldD subfamily. Homopentamer. NADP(+) is required as a cofactor.

It carries out the reaction ADP-D-glycero-beta-D-manno-heptose = ADP-L-glycero-beta-D-manno-heptose. It participates in nucleotide-sugar biosynthesis; ADP-L-glycero-beta-D-manno-heptose biosynthesis; ADP-L-glycero-beta-D-manno-heptose from D-glycero-beta-D-manno-heptose 7-phosphate: step 4/4. Catalyzes the interconversion between ADP-D-glycero-beta-D-manno-heptose and ADP-L-glycero-beta-D-manno-heptose via an epimerization at carbon 6 of the heptose. The protein is ADP-L-glycero-D-manno-heptose-6-epimerase of Fusobacterium nucleatum subsp. nucleatum (strain ATCC 25586 / DSM 15643 / BCRC 10681 / CIP 101130 / JCM 8532 / KCTC 2640 / LMG 13131 / VPI 4355).